We begin with the raw amino-acid sequence, 122 residues long: Protein GL2-INTERACTING REPRESSOR 1 (122 aa).

Over residues Met-1–Leu-10 the composition is skewed to basic and acidic residues. Residues Met-1–Glu-62 form a disordered region. An EAR motif is present at residues Lys-7–Leu-12. Over residues Ser-27–Ser-46 the composition is skewed to low complexity. Over residues Glu-47–Glu-62 the composition is skewed to polar residues.

As to quaternary structure, interacts with GL2. Interacts with TPL. In terms of tissue distribution, expressed in root and shoot meristems.

The protein resides in the nucleus. Its function is as follows. Acts as a negative regulator of root hair development redundantly with GIR2. GIR1 and GIR2 may function as adapter proteins that associate with GL2 and participate in the control of root hair formation. GIR1 and GIR2 may function as adapter proteins that associate with TPL and participate in the repression of root gene expression. In Arabidopsis thaliana (Mouse-ear cress), this protein is Protein GL2-INTERACTING REPRESSOR 1.